A 236-amino-acid polypeptide reads, in one-letter code: uncharacterized protein (236 aa).

The HTH gntR-type domain occupies 1–69; that stretch reads MLKYQQIATE…RGSGIFVRKH (69 aa). Positions 29–48 form a DNA-binding region, H-T-H motif; that stretch reads LETLMAQFEVSKSTITKSLE.

This is an uncharacterized protein from Bacillus subtilis (strain 168).